The primary structure comprises 837 residues: A disintegrin and metalloproteinase with thrombospondin motifs 4 (837 aa).

An N-terminal signal peptide occupies residues 1-51 (MSQTGSHPGRGLAGRWLWGAQPCLLLPIVPLSWLVWLLLLLLASLLPSARL). The propeptide occupies 52-212 (ASPLPREEEI…PSPRPRRAKR (161 aa)). N-linked (GlcNAc...) asparagine glycosylation is present at Asn-68. The segment at 166–191 (EGGTPNSAGGPGAHILRRKSPASGQG) is disordered. Residues 192–199 (PMCNVKAP) carry the Cysteine switch motif. Cys-194 contacts Zn(2+). The 211-residue stretch at 218–428 (RFVETLVVAD…GYGHCLLDKP (211 aa)) folds into the Peptidase M12B domain. Cystine bridges form between Cys-293-Cys-345, Cys-322-Cys-327, Cys-339-Cys-423, Cys-377-Cys-407, Cys-449-Cys-472, Cys-460-Cys-482, Cys-467-Cys-501, Cys-495-Cys-506, Cys-532-Cys-569, Cys-536-Cys-574, and Cys-547-Cys-559. His-361 contacts Zn(2+). Residue Glu-362 is part of the active site. 2 residues coordinate Zn(2+): His-365 and His-371. In terms of domain architecture, Disintegrin spans 437–519 (TFPGKDYDAD…DQLQDFNIPQ (83 aa)). In terms of domain architecture, TSP type-1 spans 520 to 575 (AGGWGPWGPWGDCSRTCGGGVQFSSRDCTRPVPRNGGKYCEGRRTRFRSCNTEDCP). The segment at 686-837 (SKQSGSFRKF…LRRRPWVGRK (152 aa)) is spacer.

As to quaternary structure, interacts with SRPX2. Zn(2+) is required as a cofactor. In terms of processing, the precursor is cleaved by a furin endopeptidase. Glycosylated. Can be O-fucosylated by POFUT2 on a serine or a threonine residue found within the consensus sequence C1-X(2)-(S/T)-C2-G of the TSP type-1 repeat domains where C1 and C2 are the first and second cysteine residue of the repeat, respectively. Fucosylated repeats can then be further glycosylated by the addition of a beta-1,3-glucose residue by the glucosyltransferase, B3GALTL. Fucosylation mediates the efficient secretion of ADAMTS family members. Can also be C-glycosylated with one or two mannose molecules on tryptophan residues within the consensus sequence W-X-X-W of the TPRs, and N-glycosylated. These other glycosylations can also facilitate secretion.

The protein resides in the secreted. Its subcellular location is the extracellular space. It localises to the extracellular matrix. The enzyme catalyses Glutamyl endopeptidase. Bonds cleaved include 370-Thr-Glu-Gly-Glu-|-Ala-Arg-Gly-Ser-377 in the interglobular domain of mammalian aggrecan.. Cleaves aggrecan, a cartilage proteoglycan, at the '392-Glu-|-Ala-393' site and may be involved in its turnover. Also cleaves COMP. May play an important role in the destruction of aggrecan in arthritic diseases. The polypeptide is A disintegrin and metalloproteinase with thrombospondin motifs 4 (ADAMTS4) (Pongo abelii (Sumatran orangutan)).